Reading from the N-terminus, the 273-residue chain is Dermonecrotic toxin LarSicTox-alphaVII1 (273 aa).

His-5 is a catalytic residue. Glu-25 and Asp-27 together coordinate Mg(2+). The active-site Nucleophile is His-41. Disulfide bonds link Cys-45–Cys-51 and Cys-47–Cys-192. Mg(2+) is bound at residue Asp-85.

It belongs to the arthropod phospholipase D family. Class II subfamily. The cofactor is Mg(2+). Expressed by the venom gland.

It is found in the secreted. It carries out the reaction an N-(acyl)-sphingosylphosphocholine = an N-(acyl)-sphingosyl-1,3-cyclic phosphate + choline. The enzyme catalyses an N-(acyl)-sphingosylphosphoethanolamine = an N-(acyl)-sphingosyl-1,3-cyclic phosphate + ethanolamine. It catalyses the reaction a 1-acyl-sn-glycero-3-phosphocholine = a 1-acyl-sn-glycero-2,3-cyclic phosphate + choline. The catalysed reaction is a 1-acyl-sn-glycero-3-phosphoethanolamine = a 1-acyl-sn-glycero-2,3-cyclic phosphate + ethanolamine. Its function is as follows. Dermonecrotic toxins cleave the phosphodiester linkage between the phosphate and headgroup of certain phospholipids (sphingolipid and lysolipid substrates), forming an alcohol (often choline) and a cyclic phosphate. This toxin acts on sphingomyelin (SM). It may also act on ceramide phosphoethanolamine (CPE), lysophosphatidylcholine (LPC) and lysophosphatidylethanolamine (LPE), but not on lysophosphatidylserine (LPS), and lysophosphatidylglycerol (LPG). It acts by transphosphatidylation, releasing exclusively cyclic phosphate products as second products. Induces dermonecrosis, hemolysis, increased vascular permeability, edema, inflammatory response, and platelet aggregation. This Loxosceles arizonica (Arizona brown spider) protein is Dermonecrotic toxin LarSicTox-alphaVII1.